We begin with the raw amino-acid sequence, 585 residues long: Proline--tRNA ligase (585 aa).

Belongs to the class-II aminoacyl-tRNA synthetase family. ProS type 1 subfamily. As to quaternary structure, homodimer.

It is found in the cytoplasm. It carries out the reaction tRNA(Pro) + L-proline + ATP = L-prolyl-tRNA(Pro) + AMP + diphosphate. Catalyzes the attachment of proline to tRNA(Pro) in a two-step reaction: proline is first activated by ATP to form Pro-AMP and then transferred to the acceptor end of tRNA(Pro). As ProRS can inadvertently accommodate and process non-cognate amino acids such as alanine and cysteine, to avoid such errors it has two additional distinct editing activities against alanine. One activity is designated as 'pretransfer' editing and involves the tRNA(Pro)-independent hydrolysis of activated Ala-AMP. The other activity is designated 'posttransfer' editing and involves deacylation of mischarged Ala-tRNA(Pro). The misacylated Cys-tRNA(Pro) is not edited by ProRS. The polypeptide is Proline--tRNA ligase (Cutibacterium acnes (strain DSM 16379 / KPA171202) (Propionibacterium acnes)).